We begin with the raw amino-acid sequence, 123 residues long: Small ribosomal subunit protein uS13 (123 aa).

Residues 97 to 123 (PVRGQRTHTNAKTRKGRSRLPVAAKKK) form a disordered region.

The protein belongs to the universal ribosomal protein uS13 family. In terms of assembly, part of the 30S ribosomal subunit. Forms a loose heterodimer with protein S19. Forms two bridges to the 50S subunit in the 70S ribosome.

In terms of biological role, located at the top of the head of the 30S subunit, it contacts several helices of the 16S rRNA. In the 70S ribosome it contacts the 23S rRNA (bridge B1a) and protein L5 of the 50S subunit (bridge B1b), connecting the 2 subunits; these bridges are implicated in subunit movement. Contacts the tRNAs in the A and P-sites. In Ehrlichia ruminantium (strain Gardel), this protein is Small ribosomal subunit protein uS13.